Consider the following 164-residue polypeptide: 6,7-dimethyl-8-ribityllumazine synthase (164 aa).

5-amino-6-(D-ribitylamino)uracil contacts are provided by residues Phe28, Ala62–Glu64, and Ala86–Ile88. Position 91–92 (Glu91–Thr92) interacts with (2S)-2-hydroxy-3-oxobutyl phosphate. Catalysis depends on His94, which acts as the Proton donor. Asn119 is a binding site for 5-amino-6-(D-ribitylamino)uracil. Residue Arg133 participates in (2S)-2-hydroxy-3-oxobutyl phosphate binding.

Belongs to the DMRL synthase family.

The enzyme catalyses (2S)-2-hydroxy-3-oxobutyl phosphate + 5-amino-6-(D-ribitylamino)uracil = 6,7-dimethyl-8-(1-D-ribityl)lumazine + phosphate + 2 H2O + H(+). It functions in the pathway cofactor biosynthesis; riboflavin biosynthesis; riboflavin from 2-hydroxy-3-oxobutyl phosphate and 5-amino-6-(D-ribitylamino)uracil: step 1/2. Its function is as follows. Catalyzes the formation of 6,7-dimethyl-8-ribityllumazine by condensation of 5-amino-6-(D-ribitylamino)uracil with 3,4-dihydroxy-2-butanone 4-phosphate. This is the penultimate step in the biosynthesis of riboflavin. This Nitrosomonas europaea (strain ATCC 19718 / CIP 103999 / KCTC 2705 / NBRC 14298) protein is 6,7-dimethyl-8-ribityllumazine synthase.